The chain runs to 207 residues: Ras-related protein RABH1e (207 aa).

16–23 (GDQSVGKT) provides a ligand contact to GTP. Positions 38–46 (YQATIGIDF) match the Effector region motif. Residues 64-68 (DTAGQ), 122-125 (NKTD), and 152-153 (SA) contribute to the GTP site. 2 S-geranylgeranyl cysteine lipidation sites follow: cysteine 205 and cysteine 207. Cysteine 207 bears the Cysteine methyl ester mark.

The protein belongs to the small GTPase superfamily. Rab family.

Its subcellular location is the golgi apparatus membrane. Protein transport. Regulator of membrane traffic from the Golgi apparatus towards the endoplasmic reticulum (ER). In Arabidopsis thaliana (Mouse-ear cress), this protein is Ras-related protein RABH1e (RABH1E).